The following is a 284-amino-acid chain: ATP phosphoribosyltransferase (284 aa).

This sequence belongs to the ATP phosphoribosyltransferase family. Long subfamily. As to quaternary structure, equilibrium between an active dimeric form, an inactive hexameric form and higher aggregates. Interconversion between the various forms is largely reversible and is influenced by the natural substrates and inhibitors of the enzyme. Mg(2+) is required as a cofactor.

It is found in the cytoplasm. It carries out the reaction 1-(5-phospho-beta-D-ribosyl)-ATP + diphosphate = 5-phospho-alpha-D-ribose 1-diphosphate + ATP. Its pathway is amino-acid biosynthesis; L-histidine biosynthesis; L-histidine from 5-phospho-alpha-D-ribose 1-diphosphate: step 1/9. Its activity is regulated as follows. Feedback inhibited by histidine. Catalyzes the condensation of ATP and 5-phosphoribose 1-diphosphate to form N'-(5'-phosphoribosyl)-ATP (PR-ATP). Has a crucial role in the pathway because the rate of histidine biosynthesis seems to be controlled primarily by regulation of HisG enzymatic activity. In Mycobacterium avium (strain 104), this protein is ATP phosphoribosyltransferase.